Here is a 181-residue protein sequence, read N- to C-terminus: Ribulose bisphosphate carboxylase small subunit, chloroplastic 1 (181 aa).

The N-terminal 57 residues, methionine 1–arginine 57, are a transit peptide targeting the chloroplast.

This sequence belongs to the RuBisCO small chain family. (Microbial infection) Binds to tobamovirus movement protein; this interaction seems required for viral systemic movement. As to quaternary structure, heterohexadecamer of 8 large and 8 small subunits.

The protein localises to the plastid. It is found in the chloroplast. The protein resides in the cell junction. Its subcellular location is the plasmodesma. Functionally, ruBisCO catalyzes two reactions: the carboxylation of D-ribulose 1,5-bisphosphate, the primary event in carbon dioxide fixation, as well as the oxidative fragmentation of the pentose substrate. Both reactions occur simultaneously and in competition at the same active site. Although the small subunit is not catalytic it is essential for maximal activity. Involved in antiviral defenses. This is Ribulose bisphosphate carboxylase small subunit, chloroplastic 1 from Solanum lycopersicum (Tomato).